Consider the following 553-residue polypeptide: Solute carrier family 22 member 12 (553 aa).

A helical transmembrane segment spans residues 9-29 (LVGGLGRFQVLQTMALMVSIM). N-linked (GlcNAc...) asparagine glycans are attached at residues Asn-56 and Asn-102. 11 helical membrane passes run 146–166 (PMAQSIYLAGILVGAAACGPA), 174–194 (LVLTWSYLQMAVMGTAAAFAP), 195–215 (AFPVYCLFRFLLAFAVAGVMM), 232–252 (LVMTLNSLGFSFGHGLTAAVA), 260–280 (LLQLVVSVPFFLCFLYSWWLA), 351–371 (CISTLCWFAFGFTFFGLALDL), 378–398 (IFLLQMFIGVVDIPAKMGALL), 407–427 (PTLAASLLLAGLCILANTLVP), 435–455 (SALAVLGLGGVGAAFTCITIY), 466–486 (MTAVGLGQMAARGGAILGPLV), and 495–515 (WLPLLVYGTVPVLSGLAALLL). Thr-542 carries the post-translational modification Phosphothreonine.

Belongs to the major facilitator (TC 2.A.1) superfamily. Organic cation transporter (TC 2.A.1.19) family. Interacts with PDZK1. Post-translationally, N-glycosylated. As to expression, detected in kidney (at protein level). Detected in fetal and adult kidney. Detected in epithelial cells of proximal tubules in renal cortex.

It is found in the apical cell membrane. It carries out the reaction urate(out) + (S)-lactate(in) = urate(in) + (S)-lactate(out). It catalyses the reaction nicotinate(in) + urate(out) = nicotinate(out) + urate(in). The catalysed reaction is urate(out) + n chloride(in) = urate(in) + n chloride(out). The enzyme catalyses orotate(out) + nicotinate(in) = orotate(in) + nicotinate(out). Functionally, electroneutral antiporter that translocates urate across the apical membrane of proximal tubular cells in exchange for monovalent organic or inorganic anions. Involved in renal reabsorption of urate and helps maintaining blood levels of uric acid. Mediates urate uptake by an exchange with organic anions such as (S)-lactate and nicotinate, and inorganic anion Cl(-). Other inorganic anions such as Br(-), I(-) and NO3(-) may also act as counteranions that exchange for urate. Also mediates orotate tubular uptake coupled with nicotinate efflux and to a lesser extent with lactate efflux, therefore displaying a potential role in orotate renal reabsorption. Orotate transport is Cl(-)-dependent. The protein is Solute carrier family 22 member 12 of Homo sapiens (Human).